The primary structure comprises 225 residues: 7-cyano-7-deazaguanine synthase (225 aa).

Position 9–19 (9–19 (YSGGLDSTTCL)) interacts with ATP. Zn(2+) contacts are provided by cysteine 188, cysteine 198, cysteine 201, and cysteine 204.

This sequence belongs to the QueC family. Zn(2+) serves as cofactor.

The enzyme catalyses 7-carboxy-7-deazaguanine + NH4(+) + ATP = 7-cyano-7-deazaguanine + ADP + phosphate + H2O + H(+). Its pathway is purine metabolism; 7-cyano-7-deazaguanine biosynthesis. Catalyzes the ATP-dependent conversion of 7-carboxy-7-deazaguanine (CDG) to 7-cyano-7-deazaguanine (preQ(0)). This chain is 7-cyano-7-deazaguanine synthase, found in Citrifermentans bemidjiense (strain ATCC BAA-1014 / DSM 16622 / JCM 12645 / Bem) (Geobacter bemidjiensis).